Reading from the N-terminus, the 231-residue chain is Large ribosomal subunit protein uL1 (231 aa).

The protein belongs to the universal ribosomal protein uL1 family. In terms of assembly, part of the 50S ribosomal subunit.

In terms of biological role, binds directly to 23S rRNA. The L1 stalk is quite mobile in the ribosome, and is involved in E site tRNA release. Functionally, protein L1 is also a translational repressor protein, it controls the translation of the L11 operon by binding to its mRNA. The sequence is that of Large ribosomal subunit protein uL1 from Acidovorax ebreus (strain TPSY) (Diaphorobacter sp. (strain TPSY)).